The sequence spans 208 residues: MELKVLNIQGAETGEVVTLNDDIFAVEVSEHAMYLDVKAILANRRQGTHKTKTRAEVRGGGKKPYRQKGTGNARQGSSRSPIMVGGGTIFGPQPRSYEQKVNRKVKQLARRSALSSKAAAGQIVVVEDFSLESIKTRPVADMLKNLGLAEKKTLLMMPHYDNVVSTSGRNIEKLNIQVADQASTYDILNSQAVLFQKAALQKIEETLG.

Residues glutamine 46–tyrosine 97 are disordered. A compositionally biased stretch (polar residues) spans glycine 69–serine 80.

The protein belongs to the universal ribosomal protein uL4 family. As to quaternary structure, part of the 50S ribosomal subunit.

One of the primary rRNA binding proteins, this protein initially binds near the 5'-end of the 23S rRNA. It is important during the early stages of 50S assembly. It makes multiple contacts with different domains of the 23S rRNA in the assembled 50S subunit and ribosome. In terms of biological role, forms part of the polypeptide exit tunnel. This Chlorobaculum parvum (strain DSM 263 / NCIMB 8327) (Chlorobium vibrioforme subsp. thiosulfatophilum) protein is Large ribosomal subunit protein uL4.